Consider the following 271-residue polypeptide: Bifunctional protein FolD (271 aa).

Residues 154-156 (GRS), S181, and I222 each bind NADP(+).

The protein belongs to the tetrahydrofolate dehydrogenase/cyclohydrolase family. In terms of assembly, homodimer.

The catalysed reaction is (6R)-5,10-methylene-5,6,7,8-tetrahydrofolate + NADP(+) = (6R)-5,10-methenyltetrahydrofolate + NADPH. It catalyses the reaction (6R)-5,10-methenyltetrahydrofolate + H2O = (6R)-10-formyltetrahydrofolate + H(+). Its pathway is one-carbon metabolism; tetrahydrofolate interconversion. Functionally, catalyzes the oxidation of 5,10-methylenetetrahydrofolate to 5,10-methenyltetrahydrofolate and then the hydrolysis of 5,10-methenyltetrahydrofolate to 10-formyltetrahydrofolate. This is Bifunctional protein FolD from Thermotoga sp. (strain RQ2).